A 439-amino-acid polypeptide reads, in one-letter code: tRNA modification GTPase MnmE (439 aa).

(6S)-5-formyl-5,6,7,8-tetrahydrofolate is bound by residues arginine 20, glutamate 78, and lysine 116. In terms of domain architecture, TrmE-type G spans 211–364 (GIYVAILGEP…LLSAIQKKVE (154 aa)). GTP is bound by residues 221 to 226 (NSGKST), 240 to 246 (SEYAGTT), and 265 to 268 (DTAG). Residues serine 225 and threonine 246 each coordinate Mg(2+). Lysine 439 is a binding site for (6S)-5-formyl-5,6,7,8-tetrahydrofolate.

This sequence belongs to the TRAFAC class TrmE-Era-EngA-EngB-Septin-like GTPase superfamily. TrmE GTPase family. As to quaternary structure, homodimer. Heterotetramer of two MnmE and two MnmG subunits. K(+) is required as a cofactor.

It localises to the cytoplasm. In terms of biological role, exhibits a very high intrinsic GTPase hydrolysis rate. Involved in the addition of a carboxymethylaminomethyl (cmnm) group at the wobble position (U34) of certain tRNAs, forming tRNA-cmnm(5)s(2)U34. This is tRNA modification GTPase MnmE from Ehrlichia ruminantium (strain Welgevonden).